The chain runs to 415 residues: Vascular endothelial growth factor C (415 aa).

A signal peptide spans 1-31; it reads MHLLCFLSLACSLLAAALIPGPREAPATVAA. Residues 32–107 constitute a propeptide that is removed on maturation; the sequence is FESGLGFSEA…RTGDTVKLAA (76 aa). 3 disulfides stabilise this stretch: Cys127/Cys169, Cys158/Cys205, and Cys162/Cys207. Residues Asn171, Asn201, and Asn236 are each glycosylated (N-linked (GlcNAc...) asparagine). The propeptide occupies 224–415; it reads SLPATLPQCQ…PSYWKRPHLN (192 aa). Repeat copies occupy residues 276–291, 300–315, 324–339, and 343–358. The 4 X 16 AA repeats of C-X(10)-C-X-C-X(1,3)-C stretch occupies residues 276 to 358; the sequence is CGPNKELDED…LNPGKCACEC (83 aa).

This sequence belongs to the PDGF/VEGF growth factor family. As to quaternary structure, homodimer; non-covalent and antiparallel. Interacts with FLT4/VEGFR3; the interaction is required for FLT4/VEGFR3 homodimarization and activation. Post-translationally, undergoes a complex proteolytic maturation which generates a variety of processed secreted forms with increased activity toward VEGFR-3, but only the fully processed form could activate VEGFR-2. VEGF-C first form an antiparallel homodimer linked by disulfide bonds. Before secretion, a cleavage occurs between Arg-223 and Ser-224 producing a heterotetramer. The next extracellular step of the processing removes the N-terminal propeptide. Finally the mature VEGF-C is composed mostly of two VEGF homology domains (VHDs) bound by non-covalent interactions. In terms of tissue distribution, highly expressed in the lung, ovary, preputial gland and the adrenal gland. Expressed in the post-pubertal mammary glands.

The protein localises to the secreted. Functionally, growth factor active in angiogenesis, and endothelial cell growth, stimulating their proliferation and migration and also has effects on the permeability of blood vessels. May function in angiogenesis of the venous and lymphatic vascular systems during embryogenesis, and also in the maintenance of differentiated lymphatic endothelium in adults. Binds and activates KDR/VEGFR2 and FLT4/VEGFR3 receptors. This Rattus norvegicus (Rat) protein is Vascular endothelial growth factor C (Vegfc).